An 888-amino-acid polypeptide reads, in one-letter code: Villin-like protein quail (888 aa).

Residues 307-366 (GVYLLDNYGQSIWLWVGGQAPQADALSAMGNGRAFVKKKKYPDNTLVVRVLEGHEPVEFK) form a Gelsolin-like repeat. The 66-residue stretch at 823–888 (FDGHKKYPLT…MELKKQFKLF (66 aa)) folds into the HP domain.

This sequence belongs to the villin/gelsolin family. As to expression, germline specific in adult flies.

Its function is as follows. Required for the formation of cytoplasmic actin filament bundles in nurse cells, possibly by regulating both the polymerization and organization of actin filaments. Mutations in quail result in female sterility due to the disruption of cytoplasmic transport from the nurse cells into the oocyte late in oogenesis. The sequence is that of Villin-like protein quail (qua) from Drosophila melanogaster (Fruit fly).